Reading from the N-terminus, the 193-residue chain is Holliday junction branch migration complex subunit RuvA (193 aa).

A domain I region spans residues 1 to 64; the sequence is MIGRIAGILL…EDAHLLYGFL (64 aa). Residues 65–139 form a domain II region; sequence TPQERTTFRE…GKLGADLGAL (75 aa). A flexible linker region spans residues 139–143; sequence LAGAA. Residues 144 to 193 are domain III; the sequence is SQSDHAADILNALVALGYSEKEGLAAIKNVPAGTGVSEGIKLALKALSKV.

This sequence belongs to the RuvA family. As to quaternary structure, homotetramer. Forms an RuvA(8)-RuvB(12)-Holliday junction (HJ) complex. HJ DNA is sandwiched between 2 RuvA tetramers; dsDNA enters through RuvA and exits via RuvB. An RuvB hexamer assembles on each DNA strand where it exits the tetramer. Each RuvB hexamer is contacted by two RuvA subunits (via domain III) on 2 adjacent RuvB subunits; this complex drives branch migration. In the full resolvosome a probable DNA-RuvA(4)-RuvB(12)-RuvC(2) complex forms which resolves the HJ.

The protein resides in the cytoplasm. Its function is as follows. The RuvA-RuvB-RuvC complex processes Holliday junction (HJ) DNA during genetic recombination and DNA repair, while the RuvA-RuvB complex plays an important role in the rescue of blocked DNA replication forks via replication fork reversal (RFR). RuvA specifically binds to HJ cruciform DNA, conferring on it an open structure. The RuvB hexamer acts as an ATP-dependent pump, pulling dsDNA into and through the RuvAB complex. HJ branch migration allows RuvC to scan DNA until it finds its consensus sequence, where it cleaves and resolves the cruciform DNA. This Burkholderia ambifaria (strain ATCC BAA-244 / DSM 16087 / CCUG 44356 / LMG 19182 / AMMD) (Burkholderia cepacia (strain AMMD)) protein is Holliday junction branch migration complex subunit RuvA.